A 591-amino-acid chain; its full sequence is General transcription and DNA repair factor IIH subunit TFB1-1 (591 aa).

BSD domains follow at residues 112–166 (STSS…GKDS) and 191–243 (RTNR…YLYS).

It belongs to the TFB1 family. As to quaternary structure, component of the 7-subunit TFIIH core complex composed of XPB, XPD, TFB1/GTF2H1, GTF2H2/P44, TFB4/GTF2H3, TFB2/GTF2H4 and TFB5/GTF2H5, which is active in NER. The core complex associates with the 3-subunit CDK-activating kinase (CAK) module composed of CYCH1/cyclin H1, CDKD and MAT1/At4g30820 to form the 10-subunit holoenzyme (holo-TFIIH) active in transcription.

Its subcellular location is the nucleus. Functionally, component of the general transcription and DNA repair factor IIH (TFIIH) core complex, which is involved in general and transcription-coupled nucleotide excision repair (NER) of damaged DNA and, when complexed to CAK, in RNA transcription by RNA polymerase II. In NER, TFIIH acts by opening DNA around the lesion to allow the excision of the damaged oligonucleotide and its replacement by a new DNA fragment. In transcription, TFIIH has an essential role in transcription initiation. When the pre-initiation complex (PIC) has been established, TFIIH is required for promoter opening and promoter escape. Phosphorylation of the C-terminal tail (CTD) of the largest subunit of RNA polymerase II by the kinase module CAK controls the initiation of transcription. The chain is General transcription and DNA repair factor IIH subunit TFB1-1 from Arabidopsis thaliana (Mouse-ear cress).